A 319-amino-acid chain; its full sequence is MEQPLCILGIETTCDDTSIGVITESKVQAHIVLSSAKLHAQTGGVVPEVAARSHEQNLLKALQQSGVVLEQITHIAYAANPGLPGCLHVGATFARSLSFLLDKPLLPINHLYAHIFSALIDQDINQLKLPALGLVVSGGHTAIYLIKSLFDLELIAETSDDAIGEVYDKVGRAMGFPYPAGPQLDSLFQPELVKSHYFFRPSTKWTKFSYSGLKSQCFTKIKQLRERKGFNPQTHDWNEFASNFQATIIDHYINHVKDAIQQHQPQMLLLGGGVSANKYLREQVTQLQLPYLIAPLKYTSDNGAMIGFYANLLINGKNN.

Residues histidine 110 and histidine 114 each contribute to the Fe cation site. Residues 135 to 139 (VVSGG), aspartate 168, glycine 181, aspartate 185, and asparagine 277 contribute to the substrate site. Position 301 (aspartate 301) interacts with Fe cation.

This sequence belongs to the KAE1 / TsaD family. Fe(2+) is required as a cofactor.

It localises to the cytoplasm. The catalysed reaction is L-threonylcarbamoyladenylate + adenosine(37) in tRNA = N(6)-L-threonylcarbamoyladenosine(37) in tRNA + AMP + H(+). Required for the formation of a threonylcarbamoyl group on adenosine at position 37 (t(6)A37) in tRNAs that read codons beginning with adenine. Is involved in the transfer of the threonylcarbamoyl moiety of threonylcarbamoyl-AMP (TC-AMP) to the N6 group of A37, together with TsaE and TsaB. TsaD likely plays a direct catalytic role in this reaction. The chain is tRNA N6-adenosine threonylcarbamoyltransferase from Mycoplasma pneumoniae (strain ATCC 29342 / M129 / Subtype 1) (Mycoplasmoides pneumoniae).